We begin with the raw amino-acid sequence, 355 residues long: UDP-galactose translocator 1 (355 aa).

The segment at 1 to 36 is disordered; that stretch reads MKFQNVHISHQDEDKEKLLPNDKDVEKADESPSSSR. The span at 9–30 shows a compositional bias: basic and acidic residues; sequence SHQDEDKEKLLPNDKDVEKADE. 6 helical membrane passes run 40–60, 177–197, 211–231, 282–302, 309–329, and 330–350; these read VFKCYVIASMTFIWTAYTLTI, WMAITLLMFGVAFVQMNNVSA, IVGLSAVLATCVTAGFAGVYF, VWAVVILLGVGGLYISLVMRY, SMASAVSIILVVVLSMLIFPD, and IFIGMYFVLGTICVVLAVLLY.

This sequence belongs to the nucleotide-sugar transporter family. SLC35A subfamily.

The protein resides in the membrane. Its subcellular location is the cytoplasmic granule membrane. This is UDP-galactose translocator 1 (ugtp-1) from Caenorhabditis elegans.